Here is a 670-residue protein sequence, read N- to C-terminus: Oxidoreductase PigB (670 aa).

The first 19 residues, 1–19 (MIIQRLFGILYMLAGLAKA), serve as a signal peptide directing secretion. 4 helical membrane-spanning segments follow: residues 53-73 (GDVI…ILML), 76-96 (LWTT…VVIL), 98-118 (QSQP…LYML), and 238-258 (LVFF…VGFI).

This sequence belongs to the flavin monoamine oxidase family. The cofactor is FAD.

The protein resides in the membrane. It functions in the pathway antibiotic biosynthesis; prodigiosin biosynthesis. In terms of biological role, involved in the biosynthesis of 2-methyl-3-n-amyl-pyrrole (MAP), one of the terminal products involved in the biosynthesis of the red antibiotic prodigiosin (Pig). Catalyzes the oxidation of dihydro form of MAP (H2MAP) to yield MAP. The polypeptide is Oxidoreductase PigB (Serratia sp. (strain ATCC 39006) (Prodigiosinella confusarubida)).